We begin with the raw amino-acid sequence, 184 residues long: Vacuolar protein sorting-associated protein 68 (184 aa).

Residue methionine 1 is modified to N-acetylmethionine. Phosphoserine is present on serine 8. Residues 26-46 form a helical membrane-spanning segment; sequence GVYLSGALYALGFWIFLDAVL. Asparagine 52 carries an N-linked (GlcNAc...) asparagine glycan. The next 3 helical transmembrane spans lie at 56 to 76, 115 to 135, and 150 to 170; these read VHVT…TLIV, LFFG…VLII, and MGVN…VLWI.

The protein belongs to the UPF0220 family.

The protein resides in the vacuole membrane. The protein localises to the mitochondrion. Functionally, involved in vacuolar protein sorting. The chain is Vacuolar protein sorting-associated protein 68 (VPS68) from Saccharomyces cerevisiae (strain ATCC 204508 / S288c) (Baker's yeast).